The following is a 329-amino-acid chain: Ribonucleoside-diphosphate reductase subunit beta (329 aa).

Residues aspartate 66, glutamate 97, and histidine 101 each coordinate Fe cation. Tyrosine 105 is a catalytic residue. Glutamate 164, glutamate 198, and histidine 201 together coordinate Fe cation.

This sequence belongs to the ribonucleoside diphosphate reductase small chain family. In terms of assembly, tetramer of two alpha and two beta subunits. The cofactor is Fe cation.

It carries out the reaction a 2'-deoxyribonucleoside 5'-diphosphate + [thioredoxin]-disulfide + H2O = a ribonucleoside 5'-diphosphate + [thioredoxin]-dithiol. Provides the precursors necessary for DNA synthesis. Catalyzes the biosynthesis of deoxyribonucleotides from the corresponding ribonucleotides. In Bacillus subtilis (strain 168), this protein is Ribonucleoside-diphosphate reductase subunit beta (nrdF).